Consider the following 444-residue polypeptide: MKKVYIKTFGCQMNEYDSDKMADVLGSAEGMVKTDNPEEADVILFNTCSVREKAQEKVFSDLGRIRPLKEANPDLIIGVGGCVASQEGDAIVKRAPFVDVVFGPQTLHRLPDLIESRKQSGRSQVDISFPEIEKFDHIPPAKVDGGAAFVSIMEGCSKYCSFCVVPYTRGEEVSRPFEDVLTEIAGLAAQGVKEITLLGQNVNAYRGLMSDGEIADFALLLEYVHEVPGVERIRFTTSHPREFSQRIIDCYAKLPKLVSHLHLPVQSGSDRVLMAMKRGYTGLEYKSIIRKLRAIRPDLCLSSDFIIGFPGETEADFEQTLKLVRDCEFDFSFVFIYSPRPGTPAANLPDDTPHAEKVRRLEALNEVIEAKGYAINQSMVGTVQRVLVENVSKKDATMLAARTANNRVVNFAGHPRLLGRMIEVKITAAFPHSLAGEALTSESA.

Residues 2–119 (KKVYIKTFGC…LPDLIESRKQ (118 aa)) enclose the MTTase N-terminal domain. Cys-11, Cys-48, Cys-82, Cys-156, Cys-160, and Cys-163 together coordinate [4Fe-4S] cluster. Residues 142–374 (KVDGGAAFVS…NEVIEAKGYA (233 aa)) form the Radical SAM core domain. The TRAM domain occupies 377–440 (QSMVGTVQRV…PHSLAGEALT (64 aa)).

This sequence belongs to the methylthiotransferase family. MiaB subfamily. Monomer. [4Fe-4S] cluster serves as cofactor.

It localises to the cytoplasm. It carries out the reaction N(6)-dimethylallyladenosine(37) in tRNA + (sulfur carrier)-SH + AH2 + 2 S-adenosyl-L-methionine = 2-methylsulfanyl-N(6)-dimethylallyladenosine(37) in tRNA + (sulfur carrier)-H + 5'-deoxyadenosine + L-methionine + A + S-adenosyl-L-homocysteine + 2 H(+). In terms of biological role, catalyzes the methylthiolation of N6-(dimethylallyl)adenosine (i(6)A), leading to the formation of 2-methylthio-N6-(dimethylallyl)adenosine (ms(2)i(6)A) at position 37 in tRNAs that read codons beginning with uridine. This is tRNA-2-methylthio-N(6)-dimethylallyladenosine synthase from Chromobacterium violaceum (strain ATCC 12472 / DSM 30191 / JCM 1249 / CCUG 213 / NBRC 12614 / NCIMB 9131 / NCTC 9757 / MK).